A 122-amino-acid chain; its full sequence is Large ribosomal subunit protein uL14 (122 aa).

It belongs to the universal ribosomal protein uL14 family. Part of the 50S ribosomal subunit. Forms a cluster with proteins L3 and L19. In the 70S ribosome, L14 and L19 interact and together make contacts with the 16S rRNA in bridges B5 and B8.

Its function is as follows. Binds to 23S rRNA. Forms part of two intersubunit bridges in the 70S ribosome. The sequence is that of Large ribosomal subunit protein uL14 from Saccharopolyspora erythraea (strain ATCC 11635 / DSM 40517 / JCM 4748 / NBRC 13426 / NCIMB 8594 / NRRL 2338).